Consider the following 382-residue polypeptide: Mannan endo-1,4-beta-mannosidase (382 aa).

An N-terminal signal peptide occupies residues 1-19 (MVKLFSFLLLVWVASPAFS). Substrate contacts are provided by residues W83, N144, 147-151 (WDESK), and N180. The Proton donor/acceptor role is filled by E181. Residues Q187, Q204, W208, W243, Y282, and H284 each contribute to the substrate site. A disulfide bond links C195 and C262. The active-site Nucleophile is the E312. A disulfide bridge connects residues C317 and C349. Residues W341 and D348 each coordinate substrate. The segment at 346 to 350 (GGDCS) is involved in stabilization of the transition state.

This sequence belongs to the glycosyl hydrolase 5 (cellulase A) family. In terms of assembly, monomer.

The protein localises to the secreted. The enzyme catalyses Random hydrolysis of (1-&gt;4)-beta-D-mannosidic linkages in mannans, galactomannans and glucomannans.. With respect to regulation, activated particularly by Ca(2+) and Zn(2+), and to a lesser extent by Na(+), K(+), Mg(2+) and Cu(2+). Activation effect of the divalent metal ions Ca(2+), Zn(2+), Mg(2+) and Cu(2+) is reduced significantly by the addition of EDTA. Strongly inhibited by Mn(2+), Hg(2+) and Ag(+). In terms of biological role, hydrolyzes 1,4-beta linked polysaccharide backbones of mannans. Has high activity toward locust bean gum. Also active toward konjac and beta-1,4-mannan. Hydrolyzes mannotetraose (M4) and mannopentaose (M5) to mannobiose (M2) and mannotriose (M3) with a little production of mannose (M1). Hydrolyzes beta-1,4-mannan to M2, M3 and M4. Hardly hydrolyzes M2 and M3. Does not hydrolyze p-nitrophenyl-beta-D-mannopyranoside, gua-gum, carboxymethyl cellulose, soluble starch or laminarin. In Cryptopygus antarcticus (Antarctic springtail), this protein is Mannan endo-1,4-beta-mannosidase.